The following is a 568-amino-acid chain: Periplasmic trehalase (568 aa).

An N-terminal signal peptide occupies residues 1–39 (MPHVVARSGDVMSSAAPPSCTSLLGLSLSMFVAPCTLTA). Residues arginine 169, 176 to 177 (WD), asparagine 213, 222 to 224 (RSQ), 294 to 296 (RPE), and glycine 327 each bind substrate. Residues aspartate 329 and glutamate 511 each act as proton donor/acceptor in the active site. Glutamate 526 serves as a coordination point for substrate.

The protein belongs to the glycosyl hydrolase 37 family.

Its subcellular location is the periplasm. It carries out the reaction alpha,alpha-trehalose + H2O = alpha-D-glucose + beta-D-glucose. Functionally, provides the cells with the ability to utilize trehalose at high osmolarity by splitting it into glucose molecules that can subsequently be taken up by the phosphotransferase-mediated uptake system. The chain is Periplasmic trehalase from Xanthomonas oryzae pv. oryzae (strain MAFF 311018).